Here is a 220-residue protein sequence, read N- to C-terminus: Lactate utilization protein C (220 aa).

It belongs to the LutC/YkgG family.

In terms of biological role, is involved in L-lactate degradation and allows cells to grow with lactate as the sole carbon source. The sequence is that of Lactate utilization protein C from Anoxybacillus flavithermus (strain DSM 21510 / WK1).